The chain runs to 205 residues: Dr1-associated corepressor (205 aa).

The Histone-fold domain maps to 14–77 (PARIKKIMQT…SHLKQCIELE (64 aa)). The segment at 91-205 (PDMQGDGEDN…DEEDEEDYDS (115 aa)) is disordered. Residues 98–108 (EDNHMDGDKGA) show a composition bias toward basic and acidic residues. The segment covering 114 to 125 (PGSGGRKNGGMG) has biased composition (gly residues). The segment covering 138-155 (SEQEDESEDTDTDGEEET) has biased composition (acidic residues). Over residues 184–193 (PLPPAPPGPS) the composition is skewed to pro residues. Acidic residues predominate over residues 195–205 (PDEEDEEDYDS).

This sequence belongs to the NC2 alpha/DRAP1 family. In terms of assembly, heterodimer with DR1. Binds BTAF1. Post-translationally, phosphorylation reduces DNA binding, but has no effect on heterodimerization and TBP binding. In terms of tissue distribution, ubiquitous. Highly expressed in adult testis, heart, skeletal muscle, pancreas and brain, and in fetal brain, liver and kidney.

The protein localises to the nucleus. In terms of biological role, the association of the DR1/DRAP1 heterodimer with TBP results in a functional repression of both activated and basal transcription of class II genes. This interaction precludes the formation of a transcription-competent complex by inhibiting the association of TFIIA and/or TFIIB with TBP. Can bind to DNA on its own. This chain is Dr1-associated corepressor (DRAP1), found in Homo sapiens (Human).